The chain runs to 131 residues: Small ribosomal subunit protein uS8 (131 aa).

Belongs to the universal ribosomal protein uS8 family. As to quaternary structure, part of the 30S ribosomal subunit. Contacts proteins S5 and S12.

Its function is as follows. One of the primary rRNA binding proteins, it binds directly to 16S rRNA central domain where it helps coordinate assembly of the platform of the 30S subunit. The polypeptide is Small ribosomal subunit protein uS8 (Bacteroides thetaiotaomicron (strain ATCC 29148 / DSM 2079 / JCM 5827 / CCUG 10774 / NCTC 10582 / VPI-5482 / E50)).